Here is an 804-residue protein sequence, read N- to C-terminus: Endoplasmin (804 aa).

The signal sequence occupies residues 1–21 (MRALWVLGLCCVLLTFGSVRA). Positions 42 to 44 (SRT) match the SRT pseudosubstrate motif motif. Asn62 carries an N-linked (GlcNAc...) asparagine glycan. Position 64 is a phosphoserine (Ser64). An N-linked (GlcNAc...) asparagine glycan is attached at Asn107. 3 residues coordinate ATP: Asn107, Asp149, and Asn162. Position 168 is an N6-(2-hydroxyisobutyryl)lysine (Lys168). Ser172 is modified (phosphoserine). Phe199 is an ATP binding site. The N-linked (GlcNAc...) asparagine glycan is linked to Asn217. The tract at residues 288–323 (TVEEPMEEEEAAKEEKEESDDEAAVEEEEEEKKPKT) is disordered. A compositionally biased stretch (acidic residues) spans 289–317 (VEEPMEEEEAAKEEKEESDDEAAVEEEEE). Phosphoserine occurs at positions 306 and 403. Residue Lys404 is modified to N6-succinyllysine. The N-linked (GlcNAc...) asparagine glycan is linked to Asn445. At Ser447 the chain carries Phosphoserine. Lys479 bears the N6-acetyllysine mark. Asn481 and Asn502 each carry an N-linked (GlcNAc...) asparagine glycan. Lys633 carries the N6-succinyllysine modification. The interval 750-804 (DPDAKVEDEPEEEPEETTEDTTEDTEQDEDEEMDVGTDEEEQETAKESTAEKDEL) is disordered. Acidic residues predominate over residues 757–791 (DEPEEEPEETTEDTTEDTEQDEDEEMDVGTDEEEQ). Thr786 carries the phosphothreonine modification. The segment covering 792-804 (ETAKESTAEKDEL) has biased composition (basic and acidic residues). The Prevents secretion from ER motif lies at 801-804 (KDEL).

Belongs to the heat shock protein 90 family. Homodimer; disulfide-linked. Component of an EIF2 complex at least composed of CELF1/CUGBP1, CALR, CALR3, EIF2S1, EIF2S2, HSP90B1 and HSPA5. Part of a large chaperone multiprotein complex comprising DNAJB11, HSP90B1, HSPA5, HYOU, PDIA2, PDIA4, PDIA6, PPIB, SDF2L1, UGGT1 and very small amounts of ERP29, but not, or at very low levels, CALR nor CANX. Interacts with AIMP1; regulates its retention in the endoplasmic reticulum. Hyperglycosylated form interacts with OS9; promoting its degradation by the endoplasmic reticulum associated degradation (ERAD). Interacts with CNPY3. This interaction is disrupted in the presence of ATP. Interacts with TLR4 and TLR9, but not with TLR3. Interacts with MZB1 in a calcium-dependent manner. Interacts with METTL23. Interacts with IL1B; the interaction facilitates cargo translocation into the ERGIC. Interacts with EIF2AK3. In terms of processing, phosphorylated by CK2. N-glycosylated cotranslationally at Asn-217 by STT3A-containing OST-A complex: this glycosylation is constitutive. In response to various stress, 5 additional facultative sites (Asn-62, Asn-107, Asn-445, Asn-481 and Asn-502) can be glycosylated post-translationally by STT3B-containing OST-B complex, leading to a hyperglycosylated form that is degraded by the ER-associated degradation (ERAD) pathway. In normal conditions, the OST-A complex together with CCDC134 prevent glycosylation at facultative sites during protein folding, thereby preventing hyperglycosylation. Mechanistically, nascent HSP90B1 is tethered during translation to a specialized CCDC134-containing translocon that forms a microenvironment for its folding, in which STT3A associates with the SRT pseudosubstrate motif, and prevents access to facultative glycosylation sites until folding is completed, rendering its facultative sites inaccessible to the OST-B complex.

The protein resides in the endoplasmic reticulum lumen. It localises to the sarcoplasmic reticulum lumen. The protein localises to the melanosome. It carries out the reaction ATP + H2O = ADP + phosphate + H(+). Its function is as follows. ATP-dependent chaperone involved in the processing of proteins in the endoplasmic reticulum, regulating their transport. Together with MESD, acts as a modulator of the Wnt pathway by promoting the folding of LRP6, a coreceptor of the canonical Wnt pathway. When associated with CNPY3, required for proper folding of Toll-like receptors. Promotes folding and trafficking of TLR4 to the cell surface. May participate in the unfolding of cytosolic leaderless cargos (lacking the secretion signal sequence) such as the interleukin 1/IL-1 to facilitate their translocation into the ERGIC (endoplasmic reticulum-Golgi intermediate compartment) and secretion; the translocation process is mediated by the cargo receptor TMED10. The chain is Endoplasmin (HSP90B1) from Macaca fascicularis (Crab-eating macaque).